Here is a 715-residue protein sequence, read N- to C-terminus: Macrolide export ATP-binding/permease protein MacB (715 aa).

In terms of domain architecture, ABC transporter spans 4–245; that stretch reads IELQDIRKTY…VSKAAPAQSK (242 aa). 40–47 provides a ligand contact to ATP; the sequence is GTSGSGKT. Positions 229–251 are disordered; the sequence is AVGDMPQVSKAAPAQSKPVHSAM. 4 helical membrane passes run 277–297, 592–612, 639–659, and 681–701; these read AALT…MMEI, LLLA…MNIM, QFLF…ILVG, and ILAA…YPAW.

It belongs to the ABC transporter superfamily. Macrolide exporter (TC 3.A.1.122) family. Homodimer.

The protein localises to the cell inner membrane. In terms of biological role, non-canonical ABC transporter that contains transmembrane domains (TMD), which form a pore in the inner membrane, and an ATP-binding domain (NBD), which is responsible for energy generation. Confers resistance against macrolides. The protein is Macrolide export ATP-binding/permease protein MacB of Syntrophobacter fumaroxidans (strain DSM 10017 / MPOB).